The primary structure comprises 203 residues: Adenylyl-sulfate kinase (203 aa).

Residue 35-42 (GLSGSGKS) participates in ATP binding. Ser109 functions as the Phosphoserine intermediate in the catalytic mechanism.

This sequence belongs to the APS kinase family.

The enzyme catalyses adenosine 5'-phosphosulfate + ATP = 3'-phosphoadenylyl sulfate + ADP + H(+). It participates in sulfur metabolism; hydrogen sulfide biosynthesis; sulfite from sulfate: step 2/3. Its function is as follows. Catalyzes the synthesis of activated sulfate. In Geotalea daltonii (strain DSM 22248 / JCM 15807 / FRC-32) (Geobacter daltonii), this protein is Adenylyl-sulfate kinase.